The sequence spans 705 residues: GATOR2 complex protein WDR24 (705 aa).

WD repeat units follow at residues 1 to 28, 34 to 74, 77 to 117, 121 to 161, 165 to 207, and 211 to 254; these read MDENLLATAATNGVVVTWNLGKPSRNKQ, EHKR…SVST, GQSE…RYER, AHNG…AKEI, QTIA…IPSA, and EHKD…IDRA. The segment at 633–655 adopts a C4-type zinc-finger fold; sequence NCSNCKRPMSNRGWICDRCRQCA. Residues Cys-634, Cys-637, Cys-648, Cys-651, Cys-658, Cys-661, Cys-672, Cys-675, His-677, His-680, His-683, Cys-694, Cys-698, His-700, and Cys-702 each coordinate Zn(2+). An RING-type; atypical zinc finger spans residues 656–705; that stretch reads SMCAVCHHVVKGLFVWCQGCSHGGHLQHIMKWLETSSHCPAGCGHLCEYT.

This sequence belongs to the WD repeat WDR24 family. In terms of assembly, component of the GATOR2 subcomplex, composed of MIOS, SEC13, SEH1L, WDR24 and WDR59. The GATOR2 complex interacts with CASTOR1 and CASTOR2; the interaction is negatively regulated by arginine. The GATOR2 complex interacts with SESN1, SESN2 and SESN3; the interaction is negatively regulated by amino acids.

Its subcellular location is the lysosome membrane. It carries out the reaction S-ubiquitinyl-[E2 ubiquitin-conjugating enzyme]-L-cysteine + [acceptor protein]-L-lysine = [E2 ubiquitin-conjugating enzyme]-L-cysteine + N(6)-ubiquitinyl-[acceptor protein]-L-lysine.. The protein operates within protein modification; protein ubiquitination. The GATOR2 complex is negatively regulated by the upstream amino acid sensors CASTOR1 and SESN2, which sequester the GATOR2 complex in absence of amino acids. In the presence of abundant amino acids, GATOR2 is released from CASTOR1 and SESN2 and activated. Functionally, catalytic component of the GATOR2 complex, a multiprotein complex that acts as an activator of the amino acid-sensing branch of the mTORC1 signaling pathway. The GATOR2 complex indirectly activates mTORC1 through the inhibition of the GATOR1 subcomplex. GATOR2 probably acts as an E3 ubiquitin-protein ligase toward GATOR1. In the presence of abundant amino acids, the GATOR2 complex mediates ubiquitination of the NPRL2 core component of the GATOR1 complex, leading to GATOR1 inactivation. In the absence of amino acids, GATOR2 is inhibited, activating the GATOR1 complex. In addition to its role in regulation of the mTORC1 complex, promotes the acidification of lysosomes and facilitates autophagic flux. Within the GATOR2 complex, WDR24 constitutes the catalytic subunit that mediates 'Lys-6'-linked ubiquitination of NPRL2. The sequence is that of GATOR2 complex protein WDR24 from Gallus gallus (Chicken).